We begin with the raw amino-acid sequence, 300 residues long: Protoheme IX farnesyltransferase (300 aa).

Transmembrane regions (helical) follow at residues 21-43, 45-65, 94-114, 117-137, 145-167, 171-193, 213-233, 235-255, and 272-292; these read PRVV…RGVP, PLSV…AGAF, ASLI…LLFV, LSAL…SIVL, IVWG…TGSI, AIVL…SIHY, LVVL…LLLI, VAHM…WFVY, and AMHI…SVGI.

The protein belongs to the UbiA prenyltransferase family. Protoheme IX farnesyltransferase subfamily.

The protein resides in the cell membrane. It catalyses the reaction heme b + (2E,6E)-farnesyl diphosphate + H2O = Fe(II)-heme o + diphosphate. The protein operates within porphyrin-containing compound metabolism; heme O biosynthesis; heme O from protoheme: step 1/1. In terms of biological role, converts heme B (protoheme IX) to heme O by substitution of the vinyl group on carbon 2 of heme B porphyrin ring with a hydroxyethyl farnesyl side group. In Tropheryma whipplei (strain TW08/27) (Whipple's bacillus), this protein is Protoheme IX farnesyltransferase.